Here is a 66-residue protein sequence, read N- to C-terminus: Sodium channel neurotoxin MeuNaTxalpha-7 (66 aa).

One can recognise an LCN-type CS-alpha/beta domain in the interval 2-64 (RDGYIADDKN…VPIKVSGKCN (63 aa)). 4 disulfide bridges follow: C12/C63, C16/C36, C22/C46, and C26/C48. The residue at position 64 (N64) is an Asparagine amide.

It belongs to the long (4 C-C) scorpion toxin superfamily. Sodium channel inhibitor family. Alpha subfamily. In terms of tissue distribution, expressed by the venom gland.

It is found in the secreted. Its function is as follows. Alpha toxins bind voltage-independently at site-3 of sodium channels (Nav) and inhibit the inactivation of the activated channels, thereby blocking neuronal transmission. The polypeptide is Sodium channel neurotoxin MeuNaTxalpha-7 (Mesobuthus eupeus (Lesser Asian scorpion)).